The chain runs to 397 residues: Glycine betaine/carnitine transport ATP-binding protein GbuA (397 aa).

Residues 28–264 (KSKTDILKET…PANEYVEKFI (237 aa)) form the ABC transporter domain. 60–67 (GLSGSGKS) is a binding site for ATP. CBS domains are found at residues 279–335 (MIRP…NITS) and 340–395 (LHRD…EVNV).

This sequence belongs to the ABC transporter superfamily. In terms of assembly, the complex is composed of two ATP-binding proteins (GbuA), two transmembrane proteins (GbuB) and a solute-binding protein (GbuC).

It catalyses the reaction a quaternary ammonium(out) + ATP + H2O = a quaternary ammonium(in) + ADP + phosphate + H(+). Its activity is regulated as follows. The complex is activated by an osmotic gradient or by low temperature. In terms of biological role, part of the ABC transporter complex GbuABC involved in glycine betaine uptake. Responsible for energy coupling to the transport system. Involved, with BetL and OpuC, in osmoprotection and cryoprotection of Listeria. Can also uptake carnitine when carnitine is abundant in the growth medium. The chain is Glycine betaine/carnitine transport ATP-binding protein GbuA (gbuA) from Listeria monocytogenes serotype 1/2a (strain 10403S).